We begin with the raw amino-acid sequence, 456 residues long: Exodeoxyribonuclease 7 large subunit (456 aa).

Belongs to the XseA family. In terms of assembly, heterooligomer composed of large and small subunits.

Its subcellular location is the cytoplasm. The enzyme catalyses Exonucleolytic cleavage in either 5'- to 3'- or 3'- to 5'-direction to yield nucleoside 5'-phosphates.. Its function is as follows. Bidirectionally degrades single-stranded DNA into large acid-insoluble oligonucleotides, which are then degraded further into small acid-soluble oligonucleotides. The protein is Exodeoxyribonuclease 7 large subunit of Lactobacillus gasseri (strain ATCC 33323 / DSM 20243 / BCRC 14619 / CIP 102991 / JCM 1131 / KCTC 3163 / NCIMB 11718 / NCTC 13722 / AM63).